Here is a 260-residue protein sequence, read N- to C-terminus: Triosephosphate isomerase (260 aa).

Substrate is bound at residue 10 to 12 (NWK). Catalysis depends on H100, which acts as the Electrophile. E172 acts as the Proton acceptor in catalysis. Substrate contacts are provided by residues G178, S218, and 239-240 (GG).

Belongs to the triosephosphate isomerase family. In terms of assembly, homodimer.

The protein localises to the cytoplasm. It carries out the reaction D-glyceraldehyde 3-phosphate = dihydroxyacetone phosphate. It functions in the pathway carbohydrate biosynthesis; gluconeogenesis. It participates in carbohydrate degradation; glycolysis; D-glyceraldehyde 3-phosphate from glycerone phosphate: step 1/1. Involved in the gluconeogenesis. Catalyzes stereospecifically the conversion of dihydroxyacetone phosphate (DHAP) to D-glyceraldehyde-3-phosphate (G3P). The polypeptide is Triosephosphate isomerase (Corynebacterium diphtheriae (strain ATCC 700971 / NCTC 13129 / Biotype gravis)).